We begin with the raw amino-acid sequence, 243 residues long: Large ribosomal subunit protein uL3 (243 aa).

Disordered stretches follow at residues 139 to 164 (VSHR…KMPG) and 218 to 243 (KPGK…QEGV). Glutamine 151 is subject to N5-methylglutamine. Positions 231–243 (QTAAAPAAEQEGV) are enriched in low complexity.

It belongs to the universal ribosomal protein uL3 family. As to quaternary structure, part of the 50S ribosomal subunit. Forms a cluster with proteins L14 and L19. Methylated by PrmB.

In terms of biological role, one of the primary rRNA binding proteins, it binds directly near the 3'-end of the 23S rRNA, where it nucleates assembly of the 50S subunit. This Rhodopseudomonas palustris (strain BisB18) protein is Large ribosomal subunit protein uL3.